Consider the following 463-residue polypeptide: 23S rRNA (uracil(1939)-C(5))-methyltransferase RlmD (463 aa).

Residues 6–76 (KSRKPQQPEY…KRLEEAEMVA (71 aa)) enclose the TRAM domain. The [4Fe-4S] cluster site is built by Cys90, Cys96, Cys99, and Cys178. S-adenosyl-L-methionine is bound by residues Gln288, Phe317, Asn322, Glu341, Asp368, and Asp389. Catalysis depends on Cys415, which acts as the Nucleophile.

Belongs to the class I-like SAM-binding methyltransferase superfamily. RNA M5U methyltransferase family. RlmD subfamily.

The enzyme catalyses uridine(1939) in 23S rRNA + S-adenosyl-L-methionine = 5-methyluridine(1939) in 23S rRNA + S-adenosyl-L-homocysteine + H(+). Functionally, catalyzes the formation of 5-methyl-uridine at position 1939 (m5U1939) in 23S rRNA. The chain is 23S rRNA (uracil(1939)-C(5))-methyltransferase RlmD from Acinetobacter baumannii (strain ACICU).